A 443-amino-acid polypeptide reads, in one-letter code: Ribosomal protein uS12 methylthiotransferase RimO (443 aa).

Positions 8-118 (PKVGFVSLGC…VVNAVHEVVP (111 aa)) constitute an MTTase N-terminal domain. [4Fe-4S] cluster is bound by residues cysteine 17, cysteine 53, cysteine 82, cysteine 151, cysteine 155, and cysteine 158. The region spanning 137–375 (LTPRHYAYLK…MAHQQAISAA (239 aa)) is the Radical SAM core domain. The TRAM domain occupies 378-443 (QLRIGKEIDV…DEYDMWAEPI (66 aa)).

Belongs to the methylthiotransferase family. RimO subfamily. [4Fe-4S] cluster serves as cofactor.

It is found in the cytoplasm. It catalyses the reaction L-aspartate(89)-[ribosomal protein uS12]-hydrogen + (sulfur carrier)-SH + AH2 + 2 S-adenosyl-L-methionine = 3-methylsulfanyl-L-aspartate(89)-[ribosomal protein uS12]-hydrogen + (sulfur carrier)-H + 5'-deoxyadenosine + L-methionine + A + S-adenosyl-L-homocysteine + 2 H(+). Catalyzes the methylthiolation of an aspartic acid residue of ribosomal protein uS12. The polypeptide is Ribosomal protein uS12 methylthiotransferase RimO (Pseudomonas putida (strain ATCC 700007 / DSM 6899 / JCM 31910 / BCRC 17059 / LMG 24140 / F1)).